Consider the following 587-residue polypeptide: Arginine--tRNA ligase (587 aa).

Residues Ala-127 to His-137 carry the 'HIGH' region motif.

This sequence belongs to the class-I aminoacyl-tRNA synthetase family. Monomer.

Its subcellular location is the cytoplasm. It catalyses the reaction tRNA(Arg) + L-arginine + ATP = L-arginyl-tRNA(Arg) + AMP + diphosphate. This is Arginine--tRNA ligase from Dechloromonas aromatica (strain RCB).